Reading from the N-terminus, the 413-residue chain is Tryptophan synthase beta chain (413 aa).

Lys106 is subject to N6-(pyridoxal phosphate)lysine.

The protein belongs to the TrpB family. In terms of assembly, tetramer of two alpha and two beta chains. Pyridoxal 5'-phosphate is required as a cofactor.

The catalysed reaction is (1S,2R)-1-C-(indol-3-yl)glycerol 3-phosphate + L-serine = D-glyceraldehyde 3-phosphate + L-tryptophan + H2O. The protein operates within amino-acid biosynthesis; L-tryptophan biosynthesis; L-tryptophan from chorismate: step 5/5. Functionally, the beta subunit is responsible for the synthesis of L-tryptophan from indole and L-serine. The protein is Tryptophan synthase beta chain of Methylobacterium radiotolerans (strain ATCC 27329 / DSM 1819 / JCM 2831 / NBRC 15690 / NCIMB 10815 / 0-1).